The sequence spans 212 residues: Dihydrophenazinedicarboxylate synthase (212 aa).

Substrate is bound at residue S8. Residues 63–66 (RVIA) and 78–79 (CT) contribute to the FMN site. H80 contributes to the substrate binding site. FMN-binding positions include 84–85 (RK) and Q107. 2 residues coordinate substrate: R129 and S137. FMN is bound by residues 142–143 (QS) and R195.

This sequence belongs to the pyridoxamine 5'-phosphate oxidase family. The cofactor is FMN.

It catalyses the reaction (1R,6R)-1,4,5,5a,6,9-hexahydrophenazine-1,6-dicarboxylate + O2 = (1R,10aS)-1,4,10,10a-tetrahydrophenazine-1,6-dicarboxylate + H2O2. The catalysed reaction is (1R,10aS)-1,4,10,10a-tetrahydrophenazine-1,6-dicarboxylate + O2 = (5aS)-5,5a-dihydrophenazine-1,6-dicarboxylate + H2O2. The enzyme catalyses (1R,10aS)-1,4,10,10a-tetrahydrophenazine-1-carboxylate + O2 = (10aS)-10,10a-dihydrophenazine-1-carboxylate + H2O2. It carries out the reaction (1R)-1,4,5,10-tetrahydrophenazine-1-carboxylate + O2 = (10aS)-10,10a-dihydrophenazine-1-carboxylate + H2O2. It functions in the pathway antibiotic biosynthesis; phenazine biosynthesis. Functionally, involved in the biosynthesis of the antibiotic phenazine, a nitrogen-containing heterocyclic molecule having important roles in virulence, competition and biological control. Catalyzes several oxidations in the terminal steps of core phenazine biosynthesis. It oxidizes both hexahydrophenazine-1,6-dicarboxylic acid (HHPDC) and tetrahydrophenazine-1-carboxylic acid (THPCA) and thereby contributes to the generation of both phenazine-1,6-dicarboxylic acid (PDC) and phenazine-1-carboxylic acid (PCA). It synthesizes phenazines in their reduced form, which are the likely end products in vivo. This is Dihydrophenazinedicarboxylate synthase from Burkholderia lata (strain ATCC 17760 / DSM 23089 / LMG 22485 / NCIMB 9086 / R18194 / 383).